A 118-amino-acid polypeptide reads, in one-letter code: Large ribosomal subunit protein bL20c (118 aa).

Belongs to the bacterial ribosomal protein bL20 family.

It is found in the plastid. Functionally, binds directly to 23S ribosomal RNA and is necessary for the in vitro assembly process of the 50S ribosomal subunit. It is not involved in the protein synthesizing functions of that subunit. The sequence is that of Large ribosomal subunit protein bL20c (rpl20) from Cuscuta reflexa (Southern Asian dodder).